The primary structure comprises 123 residues: Small ribosomal subunit protein uS12 (123 aa).

At aspartate 89 the chain carries 3-methylthioaspartic acid.

It belongs to the universal ribosomal protein uS12 family. As to quaternary structure, part of the 30S ribosomal subunit. Contacts proteins S8 and S17. May interact with IF1 in the 30S initiation complex.

Its function is as follows. With S4 and S5 plays an important role in translational accuracy. In terms of biological role, interacts with and stabilizes bases of the 16S rRNA that are involved in tRNA selection in the A site and with the mRNA backbone. Located at the interface of the 30S and 50S subunits, it traverses the body of the 30S subunit contacting proteins on the other side and probably holding the rRNA structure together. The combined cluster of proteins S8, S12 and S17 appears to hold together the shoulder and platform of the 30S subunit. The protein is Small ribosomal subunit protein uS12 of Gluconacetobacter diazotrophicus (strain ATCC 49037 / DSM 5601 / CCUG 37298 / CIP 103539 / LMG 7603 / PAl5).